Reading from the N-terminus, the 1401-residue chain is DNA-directed RNA polymerase subunit beta (1401 aa).

Belongs to the RNA polymerase beta chain family. In terms of assembly, the RNAP catalytic core consists of 2 alpha, 1 beta, 1 beta' and 1 omega subunit. When a sigma factor is associated with the core the holoenzyme is formed, which can initiate transcription.

It catalyses the reaction RNA(n) + a ribonucleoside 5'-triphosphate = RNA(n+1) + diphosphate. DNA-dependent RNA polymerase catalyzes the transcription of DNA into RNA using the four ribonucleoside triphosphates as substrates. This Desulforapulum autotrophicum (strain ATCC 43914 / DSM 3382 / VKM B-1955 / HRM2) (Desulfobacterium autotrophicum) protein is DNA-directed RNA polymerase subunit beta.